Here is a 519-residue protein sequence, read N- to C-terminus: Major facilitator superfamily domain-containing protein 8 (519 aa).

The segment at 1 to 25 (MANLGSEAEREPLLGPGSPGSREWS) is disordered. The Cytoplasmic portion of the chain corresponds to 1–41 (MANLGSEAEREPLLGPGSPGSREWSEIETQEHYKSRWKSVR). The Dileucine internalization motif signature appears at 13 to 14 (LL). A helical membrane pass occupies residues 42-62 (ILYLTMFLSSVGFSIVIMSIW). The Extracellular portion of the chain corresponds to 63 to 75 (PYLQKIDQTADAS). Residues 76–96 (FLGWVIASYSLGQMVASPLFG) traverse the membrane as a helical segment. Topologically, residues 97–106 (LWSNYRPRKE) are cytoplasmic. The helical transmembrane segment at 107 to 127 (PLIVSISISVAANCLYAYVHV) threads the bilayer. Topologically, residues 128–140 (PAAHNKYYMLIAR) are extracellular. A helical transmembrane segment spans residues 141–161 (GLVGFGAGNVAVVRSYIAGAT). Residues 162-174 (SLQERTNAMANTS) are Cytoplasmic-facing. Residues 175 to 195 (TCQALGFILGPVFQTCFALIG) form a helical membrane-spanning segment. The Extracellular segment spans residues 196 to 212 (EKGVTWDIIKLQVNMYT). A helical membrane pass occupies residues 213–233 (APVLLAAFLGILNIILILFIL). The Cytoplasmic portion of the chain corresponds to 234–267 (REHRVDDLGRQCKSVNFQEENTDEPQIPEGSIDQ). Residues 268–288 (VAVVATNIVFFVVLFIFAVYE) traverse the membrane as a helical segment. Residues 289 to 310 (TILTPLTLDMYAWTQEQAVLYD) lie on the Extracellular side of the membrane. Residues 311 to 331 (GILLVAFGVEAVLVFMGVKLL) form a helical membrane-spanning segment. Topologically, residues 332–338 (SKKIGER) are cytoplasmic. A helical transmembrane segment spans residues 339 to 359 (AILLGGFVVVWVGFFILLPWG). Topologically, residues 360-416 (NQFPKIQWEDLHNSSTPNTTFGEIIIGLWNSSREDHSEQPTGCPIEQTWCLYTPVIH) are extracellular. N-linked (GlcNAc...) asparagine glycans are attached at residues Asn-372 and Asn-377. A helical membrane pass occupies residues 417 to 439 (LAQFLTAAVLIGTGYPACSVMSY). At 440–452 (TLYSKVLGPKPQG) the chain is on the cytoplasmic side. The helical transmembrane segment at 453–473 (IYMGWLTTSGSAARILGPVFI) threads the bilayer. At 474–483 (SHVYTYLGPR) the chain is on the extracellular side. A helical transmembrane segment spans residues 484–504 (WAFSLVCGIVVLTILLIGAVY). Residues 505–519 (KRLVAFSVRYMRIQE) lie on the Cytoplasmic side of the membrane.

The protein belongs to the major facilitator superfamily.

The protein resides in the endosome membrane. It is found in the lysosome membrane. The enzyme catalyses chloride(in) = chloride(out). It catalyses the reaction iodide(out) = iodide(in). It carries out the reaction fluoride(in) = fluoride(out). Outward-rectifying chloride channel involved in endolysosomal chloride homeostasis, membrane fusion and function. Conducts chloride currents up to hundreds of picoamperes. Regulates lysosomal calcium content by reducing the lysosomal membrane potential, thereby activating TRPML1 channel and further release of lysosomal calcium ions. Regulates the pH in endolysosomal compartments and may contribute to progressive acidification from endosome to lysosome. Permeable to other halides such as iodide and fluoride ions. The polypeptide is Major facilitator superfamily domain-containing protein 8 (Mus musculus (Mouse)).